The following is a 267-amino-acid chain: Stomatin-3 (267 aa).

A helical membrane pass occupies residues 17 to 37 (FVALICAWAFLLLTFPVSIFF).

Belongs to the band 7/mec-2 family.

The protein resides in the membrane. The polypeptide is Stomatin-3 (sto-3) (Caenorhabditis elegans).